A 406-amino-acid chain; its full sequence is Copper transport protein CTR1 (406 aa).

The Cytoplasmic portion of the chain corresponds to 1–152 (MEGMNMGSSM…HHLHANNSGK (152 aa)). A run of 3 repeats spans residues 9–27 (SMNM…SSMA), 28–46 (SMSM…SSMS), and 47–65 (SMSM…STMS). The tract at residues 9–65 (SMNMDAMSSASKTVASSMASMSMDAMSSASKTILSSMSSMSMEAMSSASKTLASTMS) is 3 X 19 AA tandem repeats of S-M-X-M-X-A-M-S-S-A-S-K-T-X-X-S-X-M-X. A disordered region spans residues 71 to 117 (SMGSSSMSGMSMSMSSTPTSSASAQTTSDSSMSGMSGMSSSDNSSSS). The chain crosses the membrane as a helical span at residues 153-173 (AFGIFLLFVVAAFVYKLLLFV). The Extracellular portion of the chain corresponds to 174–250 (SWCLEVHWFK…RAFLVFTSTM (77 aa)). A helical transmembrane segment spans residues 251-271 (IIYMLMLATMSFVLTYVFAVI). Topologically, residues 272–406 (TGLALSEVFF…LLPAEKFTHN (135 aa)) are cytoplasmic. Positions 304–315 (CPGFGNCQCGRH) match the REP-III motif. The disordered stretch occupies residues 318–406 (PSPDPIAVAD…LLPAEKFTHN (89 aa)). At S344 the chain carries Phosphoserine. A Glycyl lysine isopeptide (Lys-Gly) (interchain with G-Cter in ubiquitin) cross-link involves residue K345. At S349 the chain carries Phosphoserine. Polar residues-rich tracts occupy residues 349 to 375 (SENN…NQAN) and 384 to 395 (SKLQEQSGNMDQ). T356 carries the phosphothreonine modification. S369 carries the phosphoserine modification.

In terms of assembly, homooligomer. Extensively O-glycosylated.

It is found in the cell membrane. It carries out the reaction Cu(2+)(in) = Cu(2+)(out). High-affinity copper transporter of plasma membrane that mediates copper uptake under low copper conditions. Copper transport through the high affinity system requiring CTRl supplies the iron transport multicopper ferroxidase FET3 with copper, which in turn is required for ferrous iron uptake. The energy for translocation is unlikely to be directly derived from ATP hydrolysis and the exact mechanism driving the transmembrane transport of copper has still to be determined. Binds 4 copper ions via its C-terminal cystein-rich domain and is able to deliver Cu(I) directly to both the chaperone ATX1 and to an N-terminal domain of the CCC2 protein. Also able to mediate the uptake of the anticancer drug cisplatin. This chain is Copper transport protein CTR1, found in Saccharomyces cerevisiae (strain ATCC 204508 / S288c) (Baker's yeast).